Consider the following 206-residue polypeptide: Large ribosomal subunit protein mL62 (206 aa).

Residues 1–29 constitute a mitochondrion transit peptide; sequence MAAARCLRWGLSRAEAWLLPPPTSCCHRA. At Gln-90 the chain carries N5-methylglutamine.

This sequence belongs to the prokaryotic/mitochondrial release factor family. Mitochondrion-specific ribosomal protein mL62 subfamily. In terms of assembly, component of the mitochondrial ribosome large subunit (39S) which comprises a 16S rRNA and about 50 distinct proteins. In terms of processing, methylation of glutamine in the GGQ triplet by HEMK1.

It is found in the mitochondrion. It carries out the reaction an N-acyl-L-alpha-aminoacyl-tRNA + H2O = an N-acyl-L-amino acid + a tRNA + H(+). Functionally, essential peptidyl-tRNA hydrolase component of the mitochondrial large ribosomal subunit. Acts as a codon-independent translation release factor that has lost all stop codon specificity and directs the termination of translation in mitochondrion, possibly in case of abortive elongation. May be involved in the hydrolysis of peptidyl-tRNAs that have been prematurely terminated and thus in the recycling of stalled mitochondrial ribosomes. The protein is Large ribosomal subunit protein mL62 of Bos taurus (Bovine).